The chain runs to 454 residues: Adenosylmethionine-8-amino-7-oxononanoate aminotransferase (454 aa).

Residue 119–120 participates in pyridoxal 5'-phosphate binding; that stretch reads GA. Substrate is bound at residue Y152. D257 lines the pyridoxal 5'-phosphate pocket. 3 residues coordinate substrate: K286, G321, and R416. K286 is modified (N6-(pyridoxal phosphate)lysine).

Belongs to the class-III pyridoxal-phosphate-dependent aminotransferase family. BioA subfamily. As to quaternary structure, homodimer. Requires pyridoxal 5'-phosphate as cofactor.

The protein localises to the cytoplasm. The enzyme catalyses (8S)-8-amino-7-oxononanoate + S-adenosyl-L-methionine = S-adenosyl-4-methylsulfanyl-2-oxobutanoate + (7R,8S)-7,8-diammoniononanoate. It functions in the pathway cofactor biosynthesis; biotin biosynthesis; 7,8-diaminononanoate from 8-amino-7-oxononanoate (SAM route): step 1/1. In terms of biological role, catalyzes the transfer of the alpha-amino group from S-adenosyl-L-methionine (SAM) to 7-keto-8-aminopelargonic acid (KAPA) to form 7,8-diaminopelargonic acid (DAPA). It is the only aminotransferase known to utilize SAM as an amino donor. In Anoxybacillus flavithermus (strain DSM 21510 / WK1), this protein is Adenosylmethionine-8-amino-7-oxononanoate aminotransferase.